The primary structure comprises 309 residues: Aspartate carbamoyltransferase catalytic subunit (309 aa).

Positions 55 and 56 each coordinate carbamoyl phosphate. L-aspartate is bound at residue Lys-85. Positions 106, 135, and 138 each coordinate carbamoyl phosphate. L-aspartate-binding residues include Arg-168 and Arg-230. Residues Leu-268 and Pro-269 each contribute to the carbamoyl phosphate site.

This sequence belongs to the aspartate/ornithine carbamoyltransferase superfamily. ATCase family. Heterododecamer (2C3:3R2) of six catalytic PyrB chains organized as two trimers (C3), and six regulatory PyrI chains organized as three dimers (R2).

It catalyses the reaction carbamoyl phosphate + L-aspartate = N-carbamoyl-L-aspartate + phosphate + H(+). It functions in the pathway pyrimidine metabolism; UMP biosynthesis via de novo pathway; (S)-dihydroorotate from bicarbonate: step 2/3. Its function is as follows. Catalyzes the condensation of carbamoyl phosphate and aspartate to form carbamoyl aspartate and inorganic phosphate, the committed step in the de novo pyrimidine nucleotide biosynthesis pathway. This chain is Aspartate carbamoyltransferase catalytic subunit, found in Vibrio campbellii (strain ATCC BAA-1116).